Consider the following 247-residue polypeptide: uncharacterized protein (247 aa).

The N-terminal stretch at 1-35 (MWGPGVTAEGLSVAPAPPPLLPLLLLLALALVAPS) is a signal peptide. A helical transmembrane segment spans residues 82–102 (LSGLLILLVLFAIGYFLQRII). The segment at 109–176 (YPRGQARPGQ…RGSGGRLPPS (68 aa)) is disordered. Positions 111-120 (RGQARPGQAR) are enriched in low complexity. Positions 161 to 171 (SGGGRGRGSGG) are enriched in gly residues.

Its subcellular location is the membrane. This is an uncharacterized protein from Mus musculus (Mouse).